The primary structure comprises 249 residues: uncharacterized protein (249 aa).

Residues 4–71 (VRINKFLSEA…RKRYIILNKP (68 aa)) enclose the S4 RNA-binding domain. Catalysis depends on Asp-106, which acts as the Nucleophile.

The protein belongs to the pseudouridine synthase RsuA family.

The catalysed reaction is a uridine in RNA = a pseudouridine in RNA. This is an uncharacterized protein from Aquifex aeolicus (strain VF5).